A 439-amino-acid chain; its full sequence is MKRAAMRLWTLNKGLLTHGRGLSQGSQYKISEPLHIHQVQVKLREIVGISTVWRDHVQAMEERKLLHSFLPKSQKVLPPRKIRDSYIEVLLPLGTDPELRDKYVTVQNTVRFGRILEDLDSLGVLVCYMHNHNHSTNMSLLSIVTVLVDKIDMCKHSLSPEQDIKFTGHVSWVGNTTMEVKMKMFQLHDDETYWPVLDATFVMVAQDSENKRPAFVNPLIPENKEEEELFTQGELNKSRRIAFSTSSLLKVAPSSEERNIIHELFLSTLDPKTISFQSRILPPKAVWMEDTKLKSLDICHPQERNVFNRIFGGFLMRKAYELAWATACSFGGSRPYVVTVDDIMFQKPVEVGSLLFLSSQVCFTQGNYIQVRVHSEVFSLDSREHMTTNVFHFTFMSEKEVPLIFPKTYGESMLYLDGQRHFKSMSTPVTLKKDYPVEP.

The N-terminal 21 residues, 1–21 (MKRAAMRLWTLNKGLLTHGRG), are a transit peptide targeting the mitochondrion. 2 consecutive HotDog ACOT-type domains span residues 85 to 209 (SYIE…QDSE) and 289 to 401 (EDTK…EKEV).

Belongs to the acyl coenzyme A hydrolase family.

It is found in the mitochondrion. In terms of biological role, catalyzes the hydrolysis of acyl-CoAs into free fatty acids and coenzyme A (CoASH), regulating their respective intracellular levels. Active on long chain acyl-CoAs. The polypeptide is Acyl-coenzyme A thioesterase 10, mitochondrial (Mus musculus (Mouse)).